The primary structure comprises 129 residues: Lysozyme C (129 aa).

The C-type lysozyme domain maps to 1-129 (KIYKRCELAA…VSTWIKDCKL (129 aa)). Intrachain disulfides connect Cys6–Cys127, Cys30–Cys115, Cys64–Cys80, and Cys76–Cys94. Catalysis depends on residues Glu35 and Asp52.

This sequence belongs to the glycosyl hydrolase 22 family. In terms of assembly, monomer.

The protein resides in the secreted. It catalyses the reaction Hydrolysis of (1-&gt;4)-beta-linkages between N-acetylmuramic acid and N-acetyl-D-glucosamine residues in a peptidoglycan and between N-acetyl-D-glucosamine residues in chitodextrins.. Its function is as follows. Lysozymes have primarily a bacteriolytic function; those in tissues and body fluids are associated with the monocyte-macrophage system and enhance the activity of immunoagents. The sequence is that of Lysozyme C (LYZ) from Ortalis vetula (Plain chachalaca).